Reading from the N-terminus, the 264-residue chain is 3-methyl-2-oxobutanoate hydroxymethyltransferase (264 aa).

2 residues coordinate Mg(2+): Asp46 and Asp85. 3-methyl-2-oxobutanoate is bound by residues 46–47 (DS), Asp85, and Lys113. Mg(2+) is bound at residue Glu115. Glu181 (proton acceptor) is an active-site residue.

The protein belongs to the PanB family. As to quaternary structure, homodecamer; pentamer of dimers. Mg(2+) is required as a cofactor.

The protein resides in the cytoplasm. The enzyme catalyses 3-methyl-2-oxobutanoate + (6R)-5,10-methylene-5,6,7,8-tetrahydrofolate + H2O = 2-dehydropantoate + (6S)-5,6,7,8-tetrahydrofolate. The protein operates within cofactor biosynthesis; (R)-pantothenate biosynthesis; (R)-pantoate from 3-methyl-2-oxobutanoate: step 1/2. Catalyzes the reversible reaction in which hydroxymethyl group from 5,10-methylenetetrahydrofolate is transferred onto alpha-ketoisovalerate to form ketopantoate. The sequence is that of 3-methyl-2-oxobutanoate hydroxymethyltransferase from Salmonella typhi.